A 99-amino-acid chain; its full sequence is Plastocyanin (99 aa).

A Plastocyanin-like domain is found at 1-99 (LDVLLGGDDG…AGMVGKVTVN (99 aa)). His-37, Cys-84, His-87, and Met-92 together coordinate Cu cation.

It belongs to the plastocyanin family. It depends on Cu(2+) as a cofactor.

It localises to the plastid. The protein resides in the chloroplast thylakoid membrane. Functionally, participates in electron transfer between P700 and the cytochrome b6-f complex in photosystem I. The polypeptide is Plastocyanin (PETE) (Solanum tuberosum (Potato)).